The primary structure comprises 172 residues: Nucleoside-triphosphatase THEP1 (172 aa).

ATP contacts are provided by residues 11-18 and 101-108; these read GKPGIGKT and IILIDEIG.

The protein belongs to the THEP1 NTPase family.

It catalyses the reaction a ribonucleoside 5'-triphosphate + H2O = a ribonucleoside 5'-diphosphate + phosphate + H(+). Has nucleotide phosphatase activity towards ATP, GTP, CTP, TTP and UTP. May hydrolyze nucleoside diphosphates with lower efficiency. The polypeptide is Nucleoside-triphosphatase THEP1 (Sulfolobus acidocaldarius (strain ATCC 33909 / DSM 639 / JCM 8929 / NBRC 15157 / NCIMB 11770)).